A 439-amino-acid chain; its full sequence is 26S proteasome regulatory subunit 6A (439 aa).

Methionine 1 carries the N-acetylmethionine modification. Position 9 is a phosphoserine (serine 9). ATP is bound at residue 227–234 (GPPGTGKT). Position 376 is a phosphoserine (serine 376).

It belongs to the AAA ATPase family. In terms of assembly, component of the 19S proteasome regulatory particle complex. The 26S proteasome consists of a 20S core particle (CP) and two 19S regulatory subunits (RP). The regulatory particle is made of a lid composed of 9 subunits, a base containing 6 ATPases including PSMC3 and few additional components. Interacts with PAAF1.

Its subcellular location is the cytoplasm. It localises to the nucleus. Component of the 26S proteasome, a multiprotein complex involved in the ATP-dependent degradation of ubiquitinated proteins. This complex plays a key role in the maintenance of protein homeostasis by removing misfolded or damaged proteins, which could impair cellular functions, and by removing proteins whose functions are no longer required. Therefore, the proteasome participates in numerous cellular processes, including cell cycle progression, apoptosis, or DNA damage repair. PSMC3 belongs to the heterohexameric ring of AAA (ATPases associated with diverse cellular activities) proteins that unfolds ubiquitinated target proteins that are concurrently translocated into a proteolytic chamber and degraded into peptides. The protein is 26S proteasome regulatory subunit 6A (Psmc3) of Rattus norvegicus (Rat).